Here is a 318-residue protein sequence, read N- to C-terminus: Ribokinase (318 aa).

Substrate-binding positions include 11–13 (NTD), 41–45 (GKGAN), and E146. Residues N190 and 229–234 (TLGSQG) contribute to the ATP site. D256 and T258 together coordinate K(+). 261 to 262 (GD) lines the ATP pocket. Substrate is bound at residue D262. D262 serves as the catalytic Proton acceptor. Residues T292, R295, G297, and S301 each contribute to the K(+) site.

It belongs to the carbohydrate kinase PfkB family. Ribokinase subfamily. As to quaternary structure, homodimer. Mg(2+) is required as a cofactor.

It is found in the cytoplasm. The protein localises to the nucleus. It catalyses the reaction D-ribose + ATP = D-ribose 5-phosphate + ADP + H(+). It functions in the pathway carbohydrate metabolism; D-ribose degradation; D-ribose 5-phosphate from beta-D-ribopyranose: step 2/2. Activated by a monovalent cation that binds near, but not in, the active site. The most likely occupant of the site in vivo is potassium. Ion binding induces a conformational change that may alter substrate affinity. Functionally, catalyzes the phosphorylation of ribose at O-5 in a reaction requiring ATP and magnesium. The resulting D-ribose-5-phosphate can then be used either for sythesis of nucleotides, histidine, and tryptophan, or as a component of the pentose phosphate pathway. In Schizosaccharomyces pombe (strain 972 / ATCC 24843) (Fission yeast), this protein is Ribokinase.